Consider the following 204-residue polypeptide: Small ribosomal subunit protein eS8 (204 aa).

The protein belongs to the eukaryotic ribosomal protein eS8 family.

The polypeptide is Small ribosomal subunit protein eS8 (RPS8) (Griffithsia japonica (Red alga)).